Reading from the N-terminus, the 296-residue chain is Uricase (296 aa).

Residues lysine 14 and threonine 61 each act as charge relay system in the active site. Threonine 61, aspartate 62, phenylalanine 163, arginine 180, valine 229, glutamine 230, and asparagine 256 together coordinate urate. Catalysis depends on histidine 258, which acts as the Charge relay system.

The protein belongs to the uricase family.

The protein resides in the peroxisome. The protein localises to the cytoplasm. It localises to the nucleus. The enzyme catalyses urate + O2 + H2O = 5-hydroxyisourate + H2O2. It functions in the pathway purine metabolism; urate degradation; (S)-allantoin from urate: step 1/3. In terms of biological role, catalyzes the oxidation of uric acid to 5-hydroxyisourate, which is further processed to form (S)-allantoin. The sequence is that of Uricase from Schizosaccharomyces pombe (strain 972 / ATCC 24843) (Fission yeast).